Consider the following 263-residue polypeptide: Protein M1425_2021 (263 aa).

Belongs to the CinA family.

The sequence is that of Protein M1425_2021 from Saccharolobus islandicus (strain M.14.25 / Kamchatka #1) (Sulfolobus islandicus).